An 824-amino-acid polypeptide reads, in one-letter code: Dapper 1 (824 aa).

5 disordered regions span residues 1-34, 61-80, 131-150, 454-487, and 516-536; these read MKPI…QRTR, ALTP…GDTP, EEHL…LSDG, TSNV…ESTQ, and ASSS…SSSQ. Residues 2–343 form an interaction with tcf7l1 region; sequence KPIPATPDHL…PVRTNKPRTS (342 aa). Residues 11 to 34 are compositionally biased toward basic and acidic residues; sequence LGQHQESPRRKDKGEAESERQRTR. A coiled-coil region spans residues 19-47; it reads RRKDKGEAESERQRTRERLEATLAGLAEL. Over residues 520-530 the composition is skewed to basic and acidic residues; that stretch reads FDERPPLDFKS. The short motif at 821-824 is the PDZ-binding element; the sequence is MTTV.

It belongs to the dapper family. In terms of assembly, interacts with dbf4, dvl2 and tcf7l1.

The protein resides in the cytoplasm. The protein localises to the nucleus. Its function is as follows. Involved in regulation of intracellular signaling pathways during development. Specifically thought to play a role in canonical and/or non-canonical Wnt signaling pathways through interaction with DSH (Dishevelled) family proteins. Binds to dvl2 and regulates the degradation of ctnnb1/beta-catenin, thereby modulating the transcriptional activation of target genes of the Wnt signaling pathway. May also bind to and directly stimulate the activity of tcf7l1. This chain is Dapper 1 (dact1), found in Xenopus tropicalis (Western clawed frog).